A 170-amino-acid chain; its full sequence is Phosphopantetheine adenylyltransferase (170 aa).

A substrate-binding site is contributed by Ser14. Residues 14–15 (SF) and His22 each bind ATP. Residues Lys46, Leu79, and Arg93 each coordinate substrate. ATP contacts are provided by residues 94–96 (GIR), Glu104, and 129–135 (IAEVSST).

It belongs to the bacterial CoaD family. Homohexamer. It depends on Mg(2+) as a cofactor.

It localises to the cytoplasm. It carries out the reaction (R)-4'-phosphopantetheine + ATP + H(+) = 3'-dephospho-CoA + diphosphate. Its pathway is cofactor biosynthesis; coenzyme A biosynthesis; CoA from (R)-pantothenate: step 4/5. Its function is as follows. Reversibly transfers an adenylyl group from ATP to 4'-phosphopantetheine, yielding dephospho-CoA (dPCoA) and pyrophosphate. The polypeptide is Phosphopantetheine adenylyltransferase (Neisseria meningitidis serogroup C (strain 053442)).